Consider the following 233-residue polypeptide: Ribosome maturation protein SDO1 homolog (233 aa).

It belongs to the SDO1/SBDS family.

This chain is Ribosome maturation protein SDO1 homolog, found in Aeropyrum pernix (strain ATCC 700893 / DSM 11879 / JCM 9820 / NBRC 100138 / K1).